We begin with the raw amino-acid sequence, 239 residues long: Tetraspanin-9 (239 aa).

At 1-13 the chain is on the cytoplasmic side; the sequence is MARGCLCCLKYMM. The helical transmembrane segment at 14-34 threads the bilayer; the sequence is FLFNLIFWLCGCGLLGVGIWL. The Extracellular segment spans residues 35 to 55; it reads SVSQGNFATFSPSFPSLSAAN. A helical transmembrane segment spans residues 56 to 76; it reads LVIAIGTIVMVTGFLGCLGAI. Topologically, residues 77–85 are cytoplasmic; it reads KENRCLLLS. A helical transmembrane segment spans residues 86–106; that stretch reads FFIVLLIILLAELILIILFFV. At 107 to 203 the chain is on the extracellular side; it reads YMDKVNENAR…VKMWFDDNKH (97 aa). An N-linked (GlcNAc...) asparagine glycan is attached at N180. The chain crosses the membrane as a helical span at residues 204–224; it reads VLGTVGMCILIMQILGMAFSM. Topologically, residues 225–239 are cytoplasmic; the sequence is TLFQHIHRTGKKYDA.

This sequence belongs to the tetraspanin (TM4SF) family. As to quaternary structure, found in a complex with GP6. Post-translationally, glycosylated.

Its subcellular location is the membrane. The polypeptide is Tetraspanin-9 (TSPAN9) (Sus scrofa (Pig)).